Here is a 171-residue protein sequence, read N- to C-terminus: 3-hydroxyanthranilate 3,4-dioxygenase (171 aa).

Arg44 provides a ligand contact to O2. Fe cation is bound by residues His48, Glu54, and His92. Glu54 is a binding site for substrate. Arg96 and Glu106 together coordinate substrate. Residues Cys121, Cys126, Cys160, and Cys163 each contribute to the a divalent metal cation site.

This sequence belongs to the 3-HAO family. Fe(2+) serves as cofactor.

The protein localises to the cytoplasm. The catalysed reaction is 3-hydroxyanthranilate + O2 = (2Z,4Z)-2-amino-3-carboxymuconate 6-semialdehyde. It participates in cofactor biosynthesis; NAD(+) biosynthesis; quinolinate from L-kynurenine: step 3/3. Functionally, catalyzes the oxidative ring opening of 3-hydroxyanthranilate to 2-amino-3-carboxymuconate semialdehyde, which spontaneously cyclizes to quinolinate. The sequence is that of 3-hydroxyanthranilate 3,4-dioxygenase from Yarrowia lipolytica (strain CLIB 122 / E 150) (Yeast).